We begin with the raw amino-acid sequence, 412 residues long: Histidine--tRNA ligase (412 aa).

Belongs to the class-II aminoacyl-tRNA synthetase family. In terms of assembly, homodimer.

Its subcellular location is the cytoplasm. It carries out the reaction tRNA(His) + L-histidine + ATP = L-histidyl-tRNA(His) + AMP + diphosphate + H(+). This Maridesulfovibrio salexigens (strain ATCC 14822 / DSM 2638 / NCIMB 8403 / VKM B-1763) (Desulfovibrio salexigens) protein is Histidine--tRNA ligase.